The following is a 76-amino-acid chain: ATP synthase subunit 9, mitochondrial (76 aa).

2 helical membrane passes run 14-34 (MATLGLGGAAIGIALVFVALI) and 52-72 (ILGFALAEACGLFCLMMSFLL).

This sequence belongs to the ATPase C chain family. In terms of assembly, F-type ATPases have 2 components, CF(1) - the catalytic core - and CF(0) - the membrane proton channel. CF(1) has five subunits: alpha(3), beta(3), gamma(1), delta(1), epsilon(1). CF(0) has three main subunits: a, b and c.

The protein localises to the mitochondrion membrane. Functionally, mitochondrial membrane ATP synthase (F(1)F(0) ATP synthase or Complex V) produces ATP from ADP in the presence of a proton gradient across the membrane which is generated by electron transport complexes of the respiratory chain. F-type ATPases consist of two structural domains, F(1) - containing the extramembraneous catalytic core and F(0) - containing the membrane proton channel, linked together by a central stalk and a peripheral stalk. During catalysis, ATP synthesis in the catalytic domain of F(1) is coupled via a rotary mechanism of the central stalk subunits to proton translocation. Part of the complex F(0) domain. A homomeric c-ring of probably 10 subunits is part of the complex rotary element. The chain is ATP synthase subunit 9, mitochondrial (ATP9) from Debaryomyces hansenii (strain ATCC 36239 / CBS 767 / BCRC 21394 / JCM 1990 / NBRC 0083 / IGC 2968) (Yeast).